The chain runs to 198 residues: Dual specificity protein phosphatase 14 (198 aa).

The Tyrosine-protein phosphatase domain maps to 26-167; it reads GIAQITSSLF…LIDYERQLFG (142 aa). C111 functions as the Phosphocysteine intermediate in the catalytic mechanism.

Belongs to the protein-tyrosine phosphatase family. Non-receptor class dual specificity subfamily. Interacts with CD28.

The catalysed reaction is O-phospho-L-tyrosyl-[protein] + H2O = L-tyrosyl-[protein] + phosphate. It catalyses the reaction O-phospho-L-seryl-[protein] + H2O = L-seryl-[protein] + phosphate. The enzyme catalyses O-phospho-L-threonyl-[protein] + H2O = L-threonyl-[protein] + phosphate. Involved in the inactivation of MAP kinases. Dephosphorylates ERK, JNK and p38 MAP-kinases. Plays a negative role in TCR signaling by dephosphorylating MAP3K7 adapter TAB1 leading to its inactivation. The sequence is that of Dual specificity protein phosphatase 14 (DUSP14) from Homo sapiens (Human).